The following is a 152-amino-acid chain: Deoxyuridine 5'-triphosphate nucleotidohydrolase (152 aa).

Substrate-binding positions include 72-74 (RSG), asparagine 85, and 89-91 (TID).

The protein belongs to the dUTPase family. It depends on Mg(2+) as a cofactor.

The enzyme catalyses dUTP + H2O = dUMP + diphosphate + H(+). The protein operates within pyrimidine metabolism; dUMP biosynthesis; dUMP from dCTP (dUTP route): step 2/2. Its function is as follows. This enzyme is involved in nucleotide metabolism: it produces dUMP, the immediate precursor of thymidine nucleotides and it decreases the intracellular concentration of dUTP so that uracil cannot be incorporated into DNA. The chain is Deoxyuridine 5'-triphosphate nucleotidohydrolase from Afipia carboxidovorans (strain ATCC 49405 / DSM 1227 / KCTC 32145 / OM5) (Oligotropha carboxidovorans).